A 681-amino-acid chain; its full sequence is Serine/threonine-protein kinase PAK 6 (681 aa).

4 disordered regions span residues 1 to 30, 149 to 169, 200 to 256, and 268 to 355; these read MFRKKKKKRPEISAPQNFQHRVHTSFDPKE, GGTPAGHKQMPWPEPQSPRVL, QSSP…ESSL, and TAAT…PRTW. The CRIB domain maps to 12–25; the sequence is ISAPQNFQHRVHTS. The segment at 26–406 is linker; sequence FDPKEGKFVG…VVDQGDPRLL (381 aa). 2 stretches are compositionally biased toward low complexity: residues 201-212 and 268-278; these read SSPPGASPPTGT and TAATAPPSSSK. The segment covering 308–333 has biased composition (polar residues); it reads SLPSDQPVGTFSPLTTSDTSSPQKSL. The 252-residue stretch at 407 to 658 folds into the Protein kinase domain; sequence LDSYVKIGEG…AQELLDHPFL (252 aa). ATP is bound by residues 413–421 and Lys-436; that span reads IGEGSTGIV. The active-site Proton acceptor is Asp-526. Ser-560 is modified (phosphoserine; by autocatalysis).

This sequence belongs to the protein kinase superfamily. STE Ser/Thr protein kinase family. STE20 subfamily. As to quaternary structure, interacts tightly with GTP-bound but not GDP-bound CDC42/p21 and RAC1. Interacts with the androgen receptor AR and the estrogen receptor ESR1. Interacts with IQGAP1 and PPM1B. Autophosphorylated. Phosphorylated by MAP2K6//MAPKK6, leading to PAK6 activation. Selectively expressed in brain and testis, with lower levels in multiple tissues including prostate and breast.

The protein resides in the cytoplasm. Its subcellular location is the nucleus. The catalysed reaction is L-seryl-[protein] + ATP = O-phospho-L-seryl-[protein] + ADP + H(+). The enzyme catalyses L-threonyl-[protein] + ATP = O-phospho-L-threonyl-[protein] + ADP + H(+). Serine/threonine protein kinase that plays a role in the regulation of gene transcription. The kinase activity is induced by various effectors including AR or MAP2K6/MAPKK6. Phosphorylates the DNA-binding domain of androgen receptor/AR and thereby inhibits AR-mediated transcription. Also inhibits ESR1-mediated transcription. May play a role in cytoskeleton regulation by interacting with IQGAP1. May protect cells from apoptosis through phosphorylation of BAD. In Homo sapiens (Human), this protein is Serine/threonine-protein kinase PAK 6 (PAK6).